Here is a 152-residue protein sequence, read N- to C-terminus: UPF0266 membrane protein YobD (152 aa).

Transmembrane regions (helical) follow at residues Leu-6–Met-26, Ile-45–His-65, and Ala-67–Ile-87.

This sequence belongs to the UPF0266 family.

It is found in the cell inner membrane. This is UPF0266 membrane protein YobD from Shigella boydii serotype 18 (strain CDC 3083-94 / BS512).